A 375-amino-acid chain; its full sequence is MENFPTEYFLNTSVRLLEYIRYRDSNYTREERIENLHYAYNKAAHHFAQPRQQQMLKVDPKRLQASLQTIVGMVVYSWAKVSKECMADLSIHYTYTLVLDDSSDDPHPAMLNYFDDLQAGREQSHPWWALVNEHFPNVLRHFGPFCSLNLIRSTMDFFEGCWIEQYNFGGFPGSDDYPQFLRRMNGLGHCVGASLWPKDLFDERKNFLEITTAVAQMENWMVWVNDLMSFYKEFDDERDQISLVKNFVTCHEITLDEALEKLTQETLHSSKQMVAVFADKDPQVMDTIECFMHGYVTWHLCDARYRLHEIYEKVKDQDTEDAKKFCKFFEQAANVGAVAPSEWAYPQVAQLANVRAKDDMKEAHKPILSSIELVE.

This sequence belongs to the trichodiene synthase family.

It carries out the reaction (2E,6E)-farnesyl diphosphate = trichodiene + diphosphate. It participates in sesquiterpene biosynthesis; trichothecene biosynthesis. Its function is as follows. TS is a member of the terpene cyclase group of enzymes. It catalyzes the isomerization and cyclization of farnesyl pyro-phosphate to form trichodiene, the first cyclic intermediate in the biosynthetic pathway for trichothecenes. It serves to branch trichothecene biosynthesis from the isoprenoid pathway. This Fusarium austroamericanum protein is Trichodiene synthase (TRI5).